The chain runs to 413 residues: Tyrosine--tRNA ligase (413 aa).

Residue Y33 participates in L-tyrosine binding. Positions 38 to 47 (PTADSLHVGH) match the 'HIGH' region motif. Residues Y162 and Q166 each coordinate L-tyrosine. The 'KMSKS' region signature appears at 225–229 (KFGKT). An ATP-binding site is contributed by K228. The S4 RNA-binding domain occupies 346-413 (TSAIDAIVNV…KKKYYLLEIK (68 aa)).

It belongs to the class-I aminoacyl-tRNA synthetase family. TyrS type 1 subfamily. As to quaternary structure, homodimer.

It localises to the cytoplasm. The catalysed reaction is tRNA(Tyr) + L-tyrosine + ATP = L-tyrosyl-tRNA(Tyr) + AMP + diphosphate + H(+). Catalyzes the attachment of tyrosine to tRNA(Tyr) in a two-step reaction: tyrosine is first activated by ATP to form Tyr-AMP and then transferred to the acceptor end of tRNA(Tyr). The sequence is that of Tyrosine--tRNA ligase from Mesoplasma florum (strain ATCC 33453 / NBRC 100688 / NCTC 11704 / L1) (Acholeplasma florum).